The primary structure comprises 102 residues: MAKEKIRIRLKAYDHRILDQSAEKIVETAKRSGATVSGPIPLPTEKTIYTILRAVHKYKDSREQFEMRTHKRLIDIVSPTPQTVDSLMRLDLPSGVDIEIKL.

It belongs to the universal ribosomal protein uS10 family. As to quaternary structure, part of the 30S ribosomal subunit.

Involved in the binding of tRNA to the ribosomes. This chain is Small ribosomal subunit protein uS10, found in Bacillus cereus (strain G9842).